The primary structure comprises 238 residues: UPF0173 metal-dependent hydrolase Helmi_16730 (238 aa).

Belongs to the UPF0173 family.

In Heliobacterium modesticaldum (strain ATCC 51547 / Ice1), this protein is UPF0173 metal-dependent hydrolase Helmi_16730.